A 56-amino-acid polypeptide reads, in one-letter code: Large ribosomal subunit protein bL32 (56 aa).

Residues 1 to 37 (MAVQQNKKSRSKRGMRRSHDALSTAQLSVDATSGELH) are disordered. A compositionally biased stretch (basic residues) spans 7 to 16 (KKSRSKRGMR). Residues 21-31 (ALSTAQLSVDA) are compositionally biased toward polar residues.

It belongs to the bacterial ribosomal protein bL32 family.

The polypeptide is Large ribosomal subunit protein bL32 (Shewanella loihica (strain ATCC BAA-1088 / PV-4)).